Here is a 230-residue protein sequence, read N- to C-terminus: MLLHIPTILSRTQATSMQERLAAANWTDGRETVGPQGAQVKHNLQLPETSPLRQELGNEILDALARSPLYFAATLPLRTLPPRFNCYQENHQYGFHVDGAVMSLPIAPGHTPASLRSDISCTLFLNDPDEYEGGELIIADTYGEHEVKLPAGDLIIYPSTSLHRVAPVTRGMRIASFFWVQSLVRQATHRHQLLELDTAIQSLTASNTDHNTILRLTNIYHNLLREWSET.

Residues 78 to 182 (RTLPPRFNCY…RIASFFWVQS (105 aa)) form the Fe2OG dioxygenase domain. His96, Asp98, and His163 together coordinate Fe cation. Arg173 serves as a coordination point for 2-oxoglutarate.

It depends on Fe(2+) as a cofactor. The cofactor is L-ascorbate.

In Xylella fastidiosa (strain 9a5c), this protein is PKHD-type hydroxylase XF_0598.